A 261-amino-acid polypeptide reads, in one-letter code: Cytochrome c oxidase subunit 3 (261 aa).

Residues 1 to 15 (MTHQTHAYHMVNPSP) are Mitochondrial matrix-facing. Residues 16-34 (WPLTGALSALLMTSGLAMW) traverse the membrane as a helical segment. Residues 35 to 40 (FHFNST) lie on the Mitochondrial intermembrane side of the membrane. A helical membrane pass occupies residues 41 to 66 (ILLMIGLTTNTLTMYQWWRDVIREST). Over 67–72 (FQGHHT) the chain is Mitochondrial matrix. The chain crosses the membrane as a helical span at residues 73–105 (PTVQKGLRYGMILFIISEVLFFTGFFWAFYHSS). Residues 106-128 (LAPTPELGGCWPPTGIHPLNPLE) lie on the Mitochondrial intermembrane side of the membrane. The chain crosses the membrane as a helical span at residues 129-152 (VPLLNTSVLLASGVSITWAHHSLM). The Mitochondrial matrix portion of the chain corresponds to 153 to 155 (EGN). The helical transmembrane segment at 156 to 183 (RYPMLQALFITIALGVYFTLLQASEYYE) threads the bilayer. Residues 184 to 190 (APFTISD) lie on the Mitochondrial intermembrane side of the membrane. Residues 191-223 (GVYGSTFFVATGFHGLHVIIGSTFLIVCFFRQL) form a helical membrane-spanning segment. Residues 224-232 (KFHFTSNHH) are Mitochondrial matrix-facing. A helical membrane pass occupies residues 233 to 256 (FGFEAAAWYWHFVDVVWLFLYVSI). At 257-261 (YWWGS) the chain is on the mitochondrial intermembrane side.

It belongs to the cytochrome c oxidase subunit 3 family. Component of the cytochrome c oxidase (complex IV, CIV), a multisubunit enzyme composed of 14 subunits. The complex is composed of a catalytic core of 3 subunits MT-CO1, MT-CO2 and MT-CO3, encoded in the mitochondrial DNA, and 11 supernumerary subunits COX4I, COX5A, COX5B, COX6A, COX6B, COX6C, COX7A, COX7B, COX7C, COX8 and NDUFA4, which are encoded in the nuclear genome. The complex exists as a monomer or a dimer and forms supercomplexes (SCs) in the inner mitochondrial membrane with NADH-ubiquinone oxidoreductase (complex I, CI) and ubiquinol-cytochrome c oxidoreductase (cytochrome b-c1 complex, complex III, CIII), resulting in different assemblies (supercomplex SCI(1)III(2)IV(1) and megacomplex MCI(2)III(2)IV(2)).

The protein resides in the mitochondrion inner membrane. It carries out the reaction 4 Fe(II)-[cytochrome c] + O2 + 8 H(+)(in) = 4 Fe(III)-[cytochrome c] + 2 H2O + 4 H(+)(out). Functionally, component of the cytochrome c oxidase, the last enzyme in the mitochondrial electron transport chain which drives oxidative phosphorylation. The respiratory chain contains 3 multisubunit complexes succinate dehydrogenase (complex II, CII), ubiquinol-cytochrome c oxidoreductase (cytochrome b-c1 complex, complex III, CIII) and cytochrome c oxidase (complex IV, CIV), that cooperate to transfer electrons derived from NADH and succinate to molecular oxygen, creating an electrochemical gradient over the inner membrane that drives transmembrane transport and the ATP synthase. Cytochrome c oxidase is the component of the respiratory chain that catalyzes the reduction of oxygen to water. Electrons originating from reduced cytochrome c in the intermembrane space (IMS) are transferred via the dinuclear copper A center (CU(A)) of subunit 2 and heme A of subunit 1 to the active site in subunit 1, a binuclear center (BNC) formed by heme A3 and copper B (CU(B)). The BNC reduces molecular oxygen to 2 water molecules using 4 electrons from cytochrome c in the IMS and 4 protons from the mitochondrial matrix. The sequence is that of Cytochrome c oxidase subunit 3 (MT-CO3) from Raphicerus campestris (Steenbok).